Reading from the N-terminus, the 1035-residue chain is Protein SEY1 homolog (1035 aa).

Residues 32–267 (DGTFICVSVF…TTLIPLTDSS (236 aa)) enclose the GB1/RHD3-type G domain. 42 to 49 (GPQSSGKS) lines the GTP pocket.

The protein belongs to the TRAFAC class dynamin-like GTPase superfamily. GB1/RHD3 GTPase family. RHD3 subfamily.

Its subcellular location is the endoplasmic reticulum membrane. Probable GTP-binding protein that may be involved in cell development. The sequence is that of Protein SEY1 homolog from Giardia intestinalis (strain ATCC 50803 / WB clone C6) (Giardia lamblia).